A 298-amino-acid chain; its full sequence is Cholesterol 25-hydroxylase (298 aa).

Asparagine 5 is a glycosylation site (N-linked (GlcNAc...) asparagine). 3 consecutive transmembrane segments (helical) span residues 38 to 58 (IFPV…FVVL), 88 to 108 (LGLT…LHWV), and 124 to 144 (LLSH…AWHL). Residues 128 to 263 (VLICLLLFDT…FTHWDKMLGT (136 aa)) enclose the Fatty acid hydroxylase domain. The Histidine box-1 signature appears at 142-146 (WHLLH). The Histidine box-2 motif lies at 157–161 (HKVHH). Asparagine 163 carries an N-linked (GlcNAc...) asparagine glycan. The short motif at 238-244 (HHDMHHS) is the Histidine box-3 element.

The protein belongs to the sterol desaturase family. Requires Fe cation as cofactor. N-glycosylated. As to expression, widely expressed at low level and at higher level in the lung. Weakly expressed in the heart, lung and kidney.

The protein localises to the endoplasmic reticulum membrane. It carries out the reaction cholesterol + AH2 + O2 = 25-hydroxycholesterol + A + H2O. The enzyme catalyses cholesterol + NADPH + O2 + H(+) = 25-hydroxycholesterol + NADP(+) + H2O. Its function is as follows. Catalyzes the formation of 25-hydroxycholesterol from cholesterol, leading to repress cholesterol biosynthetic enzymes. Plays a key role in cell positioning and movement in lymphoid tissues: 25-hydroxycholesterol is an intermediate in biosynthesis of 7-alpha,25-dihydroxycholesterol (7-alpha,25-OHC), an oxysterol that acts as a ligand for the G protein-coupled receptor GPR183/EBI2, a chemotactic receptor for a number of lymphoid cells. May play an important role in regulating lipid metabolism by synthesizing a corepressor that blocks sterol regulatory element binding protein (SREBP) processing. In testis, production of 25-hydroxycholesterol by macrophages may play a role in Leydig cell differentiation. Required to restrain inflammation in macrophages: production of 25-hydroxycholesterol protects macrophages from cholesterol overload, thereby preventing mitochondrial DNA release and subsequent activation of the AIM2 inflammasome. Interferon-stimulated gene which has broad antiviral activities against a wide range of enveloped viruses. The chain is Cholesterol 25-hydroxylase from Mus musculus (Mouse).